The chain runs to 389 residues: S-adenosylmethionine synthase 3 (389 aa).

Glutamate 9 provides a ligand contact to Mg(2+). An ATP-binding site is contributed by histidine 15. Glutamate 43 serves as a coordination point for K(+). 2 residues coordinate L-methionine: glutamate 56 and glutamine 99. ATP contacts are provided by residues 167–169, 235–238, aspartate 246, 252–253, alanine 269, lysine 273, and lysine 277; these read DGK, SGRF, and RK. Aspartate 246 serves as a coordination point for L-methionine. Residue lysine 277 participates in L-methionine binding.

It belongs to the AdoMet synthase family. As to quaternary structure, homotetramer. The cofactor is Mn(2+). Requires Mg(2+) as cofactor. Co(2+) is required as a cofactor. It depends on K(+) as a cofactor.

It localises to the cytoplasm. It carries out the reaction L-methionine + ATP + H2O = S-adenosyl-L-methionine + phosphate + diphosphate. It functions in the pathway amino-acid biosynthesis; S-adenosyl-L-methionine biosynthesis; S-adenosyl-L-methionine from L-methionine: step 1/1. In terms of biological role, catalyzes the formation of S-adenosylmethionine from methionine and ATP. The reaction comprises two steps that are both catalyzed by the same enzyme: formation of S-adenosylmethionine (AdoMet) and triphosphate, and subsequent hydrolysis of the triphosphate. The sequence is that of S-adenosylmethionine synthase 3 (METK3) from Vitis vinifera (Grape).